The primary structure comprises 242 residues: 6-phosphogluconolactonase (242 aa).

This sequence belongs to the glucosamine/galactosamine-6-phosphate isomerase family. 6-phosphogluconolactonase subfamily.

It carries out the reaction 6-phospho-D-glucono-1,5-lactone + H2O = 6-phospho-D-gluconate + H(+). It participates in carbohydrate degradation; pentose phosphate pathway; D-ribulose 5-phosphate from D-glucose 6-phosphate (oxidative stage): step 2/3. Hydrolysis of 6-phosphogluconolactone to 6-phosphogluconate. This Pseudomonas putida (Arthrobacter siderocapsulatus) protein is 6-phosphogluconolactonase (pgl).